The following is a 930-amino-acid chain: uncharacterized protein (930 aa).

Positions 434 to 441 (IRRGISRK) match the Nuclear localization signal motif.

Its subcellular location is the nucleus. This is an uncharacterized protein from Chaetomium thermophilum (strain DSM 1495 / CBS 144.50 / IMI 039719) (Thermochaetoides thermophila).